A 584-amino-acid chain; its full sequence is Sodium/calcium exchanger NCL1 (584 aa).

The next 5 membrane-spanning stretches (helical) occupy residues Phe77–Leu97, Leu120–Val140, Val154–Gly174, Ala215–Leu235, and Val245–Phe265. EF-hand domains follow at residues Pro305–Glu340 and Asp345–Glu380. Ca(2+) is bound by residues Asp318, Asp320, Ser322, Thr324, Glu329, Asp358, Ser360, Asn362, and Glu369. The next 5 helical transmembrane spans lie at Trp426–Ala446, Phe466–Ile486, Tyr504–Ile524, Phe531–Phe551, and Leu561–Phe581.

It belongs to the Ca(2+):cation antiporter (CaCA) (TC 2.A.19) family.

The protein resides in the cell membrane. May function as a sodium/calcium exchanger (NCX) and participate in the maintenance of calcium homeostasis. May play a role abiotic stress responses. In Oryza sativa subsp. japonica (Rice), this protein is Sodium/calcium exchanger NCL1.